Reading from the N-terminus, the 160-residue chain is uncharacterized protein (160 aa).

In terms of domain architecture, N-acetyltransferase spans Leu9–Glu151.

This is an uncharacterized protein from Oceanobacillus iheyensis (strain DSM 14371 / CIP 107618 / JCM 11309 / KCTC 3954 / HTE831).